Here is a 299-residue protein sequence, read N- to C-terminus: Undecaprenyl-diphosphatase (299 aa).

A run of 8 helical transmembrane segments spans residues 10–32, 63–83, 112–132, 143–163, 178–198, 213–233, 243–263, and 276–296; these read LFSL…RNLV, PGVS…IAYF, LAIA…KLFW, LPSI…AESF, GFVV…RSGS, AARF…LVEL, GGVL…WLAI, and WIFV…WLSG.

Belongs to the UppP family.

The protein resides in the cell inner membrane. The catalysed reaction is di-trans,octa-cis-undecaprenyl diphosphate + H2O = di-trans,octa-cis-undecaprenyl phosphate + phosphate + H(+). In terms of biological role, catalyzes the dephosphorylation of undecaprenyl diphosphate (UPP). Confers resistance to bacitracin. This chain is Undecaprenyl-diphosphatase, found in Prochlorococcus marinus (strain MIT 9313).